The sequence spans 101 residues: Urease subunit beta (101 aa).

Belongs to the urease beta subunit family. As to quaternary structure, heterotrimer of UreA (gamma), UreB (beta) and UreC (alpha) subunits. Three heterotrimers associate to form the active enzyme.

It is found in the cytoplasm. It catalyses the reaction urea + 2 H2O + H(+) = hydrogencarbonate + 2 NH4(+). It functions in the pathway nitrogen metabolism; urea degradation; CO(2) and NH(3) from urea (urease route): step 1/1. The chain is Urease subunit beta from Ralstonia pickettii (strain 12J).